The primary structure comprises 146 residues: 3-dehydroquinate dehydratase (146 aa).

Residue Tyr24 is the Proton acceptor of the active site. Asn73, His79, and Asp86 together coordinate substrate. The active-site Proton donor is His99. Residues 100–101 (LS) and Arg110 each bind substrate.

The protein belongs to the type-II 3-dehydroquinase family. Homododecamer.

It carries out the reaction 3-dehydroquinate = 3-dehydroshikimate + H2O. It participates in metabolic intermediate biosynthesis; chorismate biosynthesis; chorismate from D-erythrose 4-phosphate and phosphoenolpyruvate: step 3/7. Catalyzes a trans-dehydration via an enolate intermediate. This chain is 3-dehydroquinate dehydratase, found in Shewanella oneidensis (strain ATCC 700550 / JCM 31522 / CIP 106686 / LMG 19005 / NCIMB 14063 / MR-1).